Reading from the N-terminus, the 20-residue chain is Unknown protein from 2D-PAGE (20 aa).

The protein is Unknown protein from 2D-PAGE of Nicotiana tabacum (Common tobacco).